The chain runs to 601 residues: Glutathione-regulated potassium-efflux system protein KefB (601 aa).

13 helical membrane-spanning segments follow: residues 4 to 24, 29 to 49, 55 to 75, 87 to 107, 115 to 135, 152 to 172, 177 to 197, 207 to 227, 230 to 250, 268 to 288, 291 to 311, 324 to 344, and 356 to 376; these read SDFL…VPLA, IGAV…GLGF, EILH…GLEL, IFGV…GLLM, AAVV…LQLM, VLLF…LLAG, HFDW…LIGG, FIAA…LVLG, LFMD…GVLL, GLLL…GVLY, LLWV…VLYL, MQFA…FSTA, and ALLL…MKLV. The RCK N-terminal domain maps to 400–519; sequence KPQVIVVGFG…AGVTQFSRET (120 aa).

The protein belongs to the monovalent cation:proton antiporter 2 (CPA2) transporter (TC 2.A.37) family. KefB subfamily. As to quaternary structure, interacts with the regulatory subunit KefG.

It localises to the cell inner membrane. Its function is as follows. Pore-forming subunit of a potassium efflux system that confers protection against electrophiles. Catalyzes K(+)/H(+) antiport. The polypeptide is Glutathione-regulated potassium-efflux system protein KefB (Escherichia coli O1:K1 / APEC).